Here is a 417-residue protein sequence, read N- to C-terminus: Serine hydroxymethyltransferase 1 (417 aa).

(6S)-5,6,7,8-tetrahydrofolate contacts are provided by residues leucine 121 and 125–127 (GHL). Lysine 230 bears the N6-(pyridoxal phosphate)lysine mark. 355–357 (SPF) is a (6S)-5,6,7,8-tetrahydrofolate binding site.

The protein belongs to the SHMT family. As to quaternary structure, homodimer. The cofactor is pyridoxal 5'-phosphate.

Its subcellular location is the cytoplasm. It catalyses the reaction (6R)-5,10-methylene-5,6,7,8-tetrahydrofolate + glycine + H2O = (6S)-5,6,7,8-tetrahydrofolate + L-serine. It functions in the pathway one-carbon metabolism; tetrahydrofolate interconversion. It participates in amino-acid biosynthesis; glycine biosynthesis; glycine from L-serine: step 1/1. Its function is as follows. Catalyzes the reversible interconversion of serine and glycine with tetrahydrofolate (THF) serving as the one-carbon carrier. This reaction serves as the major source of one-carbon groups required for the biosynthesis of purines, thymidylate, methionine, and other important biomolecules. Also exhibits THF-independent aldolase activity toward beta-hydroxyamino acids, producing glycine and aldehydes, via a retro-aldol mechanism. The protein is Serine hydroxymethyltransferase 1 of Pseudomonas syringae pv. tomato (strain ATCC BAA-871 / DC3000).